We begin with the raw amino-acid sequence, 348 residues long: 2-heptyl-4(1H)-quinolone synthase subunit PqsC (348 aa).

Catalysis depends on C129, which acts as the Acyl-thioester intermediate. H269 is a catalytic residue.

It belongs to the thiolase-like superfamily. FabH family. As to quaternary structure, forms a tight complex with PqsB.

Its subcellular location is the cytoplasm. The enzyme catalyses (2-aminobenzoyl)acetate + octanoyl-CoA + H(+) = 2-heptyl-4(1H)-quinolone + CO2 + CoA + H2O. Its activity is regulated as follows. Folding of PqsC and binding of octanoate are promoted by PqsB. Binding of the octanoyl group probably increases the binding affinity of the complex for 2-ABA. Activity of the complex is inhibited by 2-aminoacetophenone (2-AA). Required for the biosynthesis of the quorum-sensing signaling molecules 2-heptyl-4(1H)-quinolone (HHQ) and 2-heptyl-3-hydroxy-4(1H)-quinolone (Pseudomonas quinolone signal or PQS), which are important for biofilm formation and virulence. The PqsC/PqsB complex catalyzes the condensation of 2-aminobenzoylacetate (2-ABA) and octanoyl-CoA to form HHQ. First, PqsC acquires an octanoyl group from octanoyl-CoA and forms an octanoyl-PqsC intermediate. Then, together with PqsB, it catalyzes the coupling of 2-ABA with the octanoate group, leading to decarboxylation and dehydration, and resulting in closure of the quinoline ring. This is 2-heptyl-4(1H)-quinolone synthase subunit PqsC from Pseudomonas aeruginosa (strain ATCC 15692 / DSM 22644 / CIP 104116 / JCM 14847 / LMG 12228 / 1C / PRS 101 / PAO1).